We begin with the raw amino-acid sequence, 1146 residues long: Probable transport protein MmpL12 (1146 aa).

11 helical membrane passes run 25–45 (LIVI…LPTL), 206–226 (VSVL…LVPL), 254–274 (AIVF…VFLI), 298–318 (IGKV…AMVF), 330–350 (AIAV…PAIL), 382–402 (TIHL…TLLI), 826–846 (FIVI…LRAL), 850–870 (IYLI…GTLV), 883–903 (LPGL…MLLI), 928–948 (VITS…GASI), and 949–969 (NTMA…TFLV).

The protein belongs to the resistance-nodulation-cell division (RND) (TC 2.A.6) family. MmpL subfamily.

It localises to the cell membrane. The sequence is that of Probable transport protein MmpL12 (mmpL12) from Mycobacterium tuberculosis (strain CDC 1551 / Oshkosh).